Consider the following 994-residue polypeptide: MRPVALLLLPSLLALLAHGLSLEAPTVGKGQAPGIEETDGELTAAPTPEQPERGVHFVTTAPTLKLLNHHPLLEEFLQEGLEKGDEELRPALPFQPDPPAPFTPSPLPRLANQDSRPVFTSPTPAMAAVPTQPQSKEGPWSPESESPMLRITAPLPPGPSMAVPTLGPGEIASTTPPSRAWTPTQEGPGDMGRPWVAEVVSQGAGIGIQGTITSSTASGDDEETTTTTTIITTTITTVQTPGPCSWNFSGPEGSLDSPTDLSSPTDVGLDCFFYISVYPGYGVEIKVQNISLREGETVTVEGLGGPDPLPLANQSFLLRGQVIRSPTHQAALRFQSLPPPAGPGTFHFHYQAYLLSCHFPRRPAYGDVTVTSLHPGGSARFHCATGYQLKGARHLTCLNATQPFWDSKEPVCIAACGGVIRNATTGRIVSPGFPGNYSNNLTCHWLLEAPEGQRLHLHFEKVSLAEDDDRLIIRNGDNVEAPPVYDSYEVEYLPIEGLLSSGKHFFVELSTDSSGAAAGMALRYEAFQQGHCYEPFVKYGNFSSSTPTYPVGTTVEFSCDPGYTLEQGSIIIECVDPHDPQWNETEPACRAVCSGEITDSAGVVLSPNWPEPYGRGQDCIWGVHVEEDKRIMLDIRVLRIGPGDVLTFYDGDDLTARVLGQYSGPRSHFKLFTSMADVTIQFQSDPGTSVLGYQQGFVIHFFEVPRNDTCPELPEIPNGWKSPSQPELVHGTVVTYQCYPGYQVVGSSVLMCQWDLTWSEDLPSCQRVTSCHDPGDVEHSRRLISSPKFPVGATVQYICDQGFVLMGSSILTCHDRQAGSPKWSDRAPKCLLEQLKPCHGLSAPENGARSPEKQLHPAGATIHFSCAPGYVLKGQASIKCVPGHPSHWSDPPPICRAASLDGFYNSRSLDVAKAPAASSTLDAAHIAAAIFLPLVAMVLLVGGVYFYFSRLQGKSSLQLPRPRPRPYNRITIESAFDNPTYETGSLSFAGDERI.

Residues 1–19 (MRPVALLLLPSLLALLAHG) form the signal peptide. Residues 20–925 (LSLEAPTVGK…AASSTLDAAH (906 aa)) lie on the Extracellular side of the membrane. The segment at 28-50 (GKGQAPGIEETDGELTAAPTPEQ) is disordered. O-glycosylated at two sites stretches follow at residues 38–47 (TDGELTAAPT) and 59–63 (TTAPT). Disordered stretches follow at residues 88 to 146 (LRPA…ESES), 171 to 191 (IAST…PGDM), and 241 to 261 (PGPC…PTDL). Over residues 93–107 (PFQPDPPAPFTPSPL) the composition is skewed to pro residues. 2 stretches are compositionally biased toward polar residues: residues 112–123 (NQDSRPVFTSPT) and 172–185 (ASTT…TPTQ). Asn-289 is a glycosylation site (N-linked (GlcNAc...) asparagine). Positions 355 to 414 (LSCHFPRRPAYGDVTVTSLHPGGSARFHCATGYQLKGARHLTCLNATQPFWDSKEPVCIA) constitute a Sushi 1 domain. Intrachain disulfides connect Cys-357/Cys-397, Cys-383/Cys-412, Cys-416/Cys-443, Cys-532/Cys-574, Cys-559/Cys-589, Cys-593/Cys-619, Cys-710/Cys-752, Cys-738/Cys-765, Cys-771/Cys-813, Cys-799/Cys-830, Cys-838/Cys-880, and Cys-866/Cys-895. Residues Asn-399, Asn-436, and Asn-541 are each glycosylated (N-linked (GlcNAc...) asparagine). In terms of domain architecture, CUB 1 spans 416-527 (CGGVIRNATT…AGMALRYEAF (112 aa)). Residues 530–591 (GHCYEPFVKY…WNETEPACRA (62 aa)) form the Sushi 2 domain. One can recognise a CUB 2 domain in the interval 593 to 704 (CSGEITDSAG…QGFVIHFFEV (112 aa)). 3 Sushi domains span residues 708–767 (DTCP…SCQR), 769–832 (TSCH…KCLL), and 836–897 (KPCH…ICRA). Residues 926–946 (IAAAIFLPLVAMVLLVGGVYF) traverse the membrane as a helical segment. The Cytoplasmic portion of the chain corresponds to 947-994 (YFSRLQGKSSLQLPRPRPRPYNRITIESAFDNPTYETGSLSFAGDERI).

Belongs to the SEZ6 family. Glycosylated.

The protein resides in the cell membrane. In terms of biological role, may play a role in cell-cell recognition and in neuronal membrane signaling. Seems to be important for the achievement of the necessary balance between dendrite elongation and branching during the elaboration of a complex dendritic arbor. Involved in the development of appropriate excitatory synaptic connectivity. In Homo sapiens (Human), this protein is Seizure protein 6 homolog (SEZ6).